We begin with the raw amino-acid sequence, 138 residues long: uncharacterized protein (138 aa).

3 helical membrane passes run 8-28 (LIIQ…AFLP), 47-67 (FIIC…TIIV), and 82-102 (TLPV…IAFI).

It to U.parvum UU007, UU008 and UU041.

It localises to the cell membrane. This is an uncharacterized protein from Ureaplasma parvum serovar 3 (strain ATCC 700970).